The primary structure comprises 247 residues: ATP synthase subunit a, chloroplastic (247 aa).

5 consecutive transmembrane segments (helical) span residues 38–58 (QVLITSWVVIAILLGSAALAV), 95–115 (VPFIGTIFLFIFVSNWSGALL), 134–154 (INTTVALALLTSVAYFYAGLA), 199–219 (LVVVVLVSLVPSVVPIPVMFL), and 220–240 (GLFTSGIQALIFATLAAAYIG).

It belongs to the ATPase A chain family. As to quaternary structure, F-type ATPases have 2 components, CF(1) - the catalytic core - and CF(0) - the membrane proton channel. CF(1) has five subunits: alpha(3), beta(3), gamma(1), delta(1), epsilon(1). CF(0) has four main subunits: a, b, b' and c.

The protein localises to the plastid. It is found in the chloroplast thylakoid membrane. Key component of the proton channel; it plays a direct role in the translocation of protons across the membrane. The polypeptide is ATP synthase subunit a, chloroplastic (Trachelium caeruleum (Blue throatwort)).